A 616-amino-acid chain; its full sequence is Dihydroxy-acid dehydratase (616 aa).

Asp81 serves as a coordination point for Mg(2+). Cys122 is a [2Fe-2S] cluster binding site. Mg(2+) is bound by residues Asp123 and Lys124. Lys124 carries the N6-carboxylysine modification. [2Fe-2S] cluster is bound at residue Cys195. Glu491 lines the Mg(2+) pocket. Ser517 serves as the catalytic Proton acceptor.

Belongs to the IlvD/Edd family. In terms of assembly, homodimer. Requires [2Fe-2S] cluster as cofactor. Mg(2+) is required as a cofactor.

It carries out the reaction (2R)-2,3-dihydroxy-3-methylbutanoate = 3-methyl-2-oxobutanoate + H2O. The enzyme catalyses (2R,3R)-2,3-dihydroxy-3-methylpentanoate = (S)-3-methyl-2-oxopentanoate + H2O. It functions in the pathway amino-acid biosynthesis; L-isoleucine biosynthesis; L-isoleucine from 2-oxobutanoate: step 3/4. Its pathway is amino-acid biosynthesis; L-valine biosynthesis; L-valine from pyruvate: step 3/4. Functionally, functions in the biosynthesis of branched-chain amino acids. Catalyzes the dehydration of (2R,3R)-2,3-dihydroxy-3-methylpentanoate (2,3-dihydroxy-3-methylvalerate) into 2-oxo-3-methylpentanoate (2-oxo-3-methylvalerate) and of (2R)-2,3-dihydroxy-3-methylbutanoate (2,3-dihydroxyisovalerate) into 2-oxo-3-methylbutanoate (2-oxoisovalerate), the penultimate precursor to L-isoleucine and L-valine, respectively. This chain is Dihydroxy-acid dehydratase, found in Shewanella sediminis (strain HAW-EB3).